We begin with the raw amino-acid sequence, 467 residues long: Mitochondrial distribution and morphology protein 10 (467 aa).

Belongs to the MDM10 family. As to quaternary structure, component of the ER-mitochondria encounter structure (ERMES) or MDM complex, composed of MMM1, MDM10, MDM12 and MDM34. Associates with the mitochondrial outer membrane sorting assembly machinery SAM(core) complex.

The protein localises to the mitochondrion outer membrane. In terms of biological role, component of the ERMES/MDM complex, which serves as a molecular tether to connect the endoplasmic reticulum and mitochondria. Components of this complex are involved in the control of mitochondrial shape and protein biogenesis and may function in phospholipid exchange. MDM10 is involved in the late assembly steps of the general translocase of the mitochondrial outer membrane (TOM complex). Functions in the TOM40-specific route of the assembly of outer membrane beta-barrel proteins, including the association of TOM40 with the receptor TOM22 and small TOM proteins. Can associate with the SAM(core) complex as well as the MDM12-MMM1 complex, both involved in late steps of the major beta-barrel assembly pathway, that is responsible for biogenesis of all outer membrane beta-barrel proteins. May act as a switch that shuttles between both complexes and channels precursor proteins into the TOM40-specific pathway. Plays a role in mitochondrial morphology and in the inheritance of mitochondria. In Ajellomyces capsulatus (strain G186AR / H82 / ATCC MYA-2454 / RMSCC 2432) (Darling's disease fungus), this protein is Mitochondrial distribution and morphology protein 10.